Reading from the N-terminus, the 361-residue chain is Neuronal-specific septin-3 (361 aa).

The tract at residues 1–46 (MSEIVPPEVRPKPAVPAKPSHVAPPSSAPFVPSPQGTGGEGQGSGR) is disordered. The segment covering 15 to 34 (VPAKPSHVAPPSSAPFVPSP) has biased composition (low complexity). Residues 36–46 (GTGGEGQGSGR) are compositionally biased toward gly residues. One can recognise a Septin-type G domain in the interval 70 to 342 (AGFDFNIMVV…ETYRAKRLND (273 aa)). Residues 80-87 (GQSGLGKS) are G1 motif. Residues 80-87 (GQSGLGKS) and threonine 114 each bind GTP. The segment at 137-140 (DTPG) is G3 motif. The G4 motif stretch occupies residues 219-222 (AKSD). GTP-binding positions include 220 to 228 (KSDTLTPEE), glycine 276, and arginine 291. A disordered region spans residues 341 to 361 (NDNGGLHPISSSGHDTQESNL). Residues 349-361 (ISSSGHDTQESNL) show a composition bias toward polar residues.

Belongs to the TRAFAC class TrmE-Era-EngA-EngB-Septin-like GTPase superfamily. Septin GTPase family.

The protein localises to the cytoplasm. Its function is as follows. May be involved in cytokinesis. In Danio rerio (Zebrafish), this protein is Neuronal-specific septin-3.